Consider the following 359-residue polypeptide: MLRDDLDAVPGVPGVLTPEQCRQTAQAIADAQEPSGALPWFEGGHTDPWDHVENAMALTVAGLLEPARAAFDWCRTTQRPDGSWPIQIRNGVVEDANSDSNFCAYVATGVWHHVLITGDRRFAETMWPVVAKAIDFVIDMQLPGGEIAWARSPSGLYEEALLTGCASIYHSIRCALALADYMGEPQPEWEVAVGRLGHAIAEHPEAFVTKDRWSMEWYYPVLGGALRGEAARARINRRWNDFVVPGLGIRCVDDRPWVTGAETCELVLALDAIGDLTRAHEQFAAMHHLREEDGSYWTGLVYDDGKRWPIERTTWTGAAMILAADALSRTTPGNGIFRGVDLPRGLEGEYDCACATSER.

Monomer in solution.

The catalysed reaction is Endohydrolysis of 3-O-methyl-alpha-D-mannosyl-(1-&gt;4)-3-O-methyl-D-mannose linkages within (1,4)-3-O-methyl-alpha-D-mannnan substrates.. Hydrolase involved in the biosynthesis of 3-O-methylmannose polysaccharides (MMP), which are intracellular polymethylated polysaccharides implicated in the modulation of fatty acid metabolism in non-tuberculous mycobacteria. Highly specific hydrolase that catalyzes the internal cleavage of MMP. Is able to hydrolyze purified MMP into distinct lower order oligomannosides but does not cleave acylated or deacylated forms of 6-O-methylglucose lipopolysaccharide (MGLP), beta-mannans, synthetic 4alpha-oligomannosides or its own reaction products. Products were identified as four distinct oligomannosides differing in the number of mannose units (4 to 8) and methylation pattern (free or methylated C1-OH). Might serve as a recycling enzyme that hydrolyzes mature MMP into defined-size smaller oligomannosides that are, in turn, substrates for ManT and MeT1 activities for further processing into new daughter MMP chains. The polypeptide is MMP endo-(1,4)-3-O-methyl-alpha-D-mannosidase (Mycolicibacterium hassiacum (strain DSM 44199 / CIP 105218 / JCM 12690 / 3849) (Mycobacterium hassiacum)).